We begin with the raw amino-acid sequence, 417 residues long: Serine hydroxymethyltransferase (417 aa).

Residues Leu-116 and 120–122 contribute to the (6S)-5,6,7,8-tetrahydrofolate site; that span reads GHL. N6-(pyridoxal phosphate)lysine is present on Lys-225. 350–352 provides a ligand contact to (6S)-5,6,7,8-tetrahydrofolate; that stretch reads SPF.

Belongs to the SHMT family. In terms of assembly, homodimer. Requires pyridoxal 5'-phosphate as cofactor.

Its subcellular location is the cytoplasm. It catalyses the reaction (6R)-5,10-methylene-5,6,7,8-tetrahydrofolate + glycine + H2O = (6S)-5,6,7,8-tetrahydrofolate + L-serine. Its pathway is one-carbon metabolism; tetrahydrofolate interconversion. The protein operates within amino-acid biosynthesis; glycine biosynthesis; glycine from L-serine: step 1/1. Functionally, catalyzes the reversible interconversion of serine and glycine with tetrahydrofolate (THF) serving as the one-carbon carrier. This reaction serves as the major source of one-carbon groups required for the biosynthesis of purines, thymidylate, methionine, and other important biomolecules. Also exhibits THF-independent aldolase activity toward beta-hydroxyamino acids, producing glycine and aldehydes, via a retro-aldol mechanism. The sequence is that of Serine hydroxymethyltransferase from Ligilactobacillus salivarius (strain UCC118) (Lactobacillus salivarius).